Consider the following 274-residue polypeptide: Protein-export membrane protein SecF (274 aa).

The next 6 helical transmembrane spans lie at 14–34 (LLILTMVFAVICAGSTLALGV), 121–141 (SVKVAVPLALVAVSIVVFAIF), 143–163 (KPLLSAAVLGALALDLVDALG), 175–197 (ASFAGLLMIIGYAVDSNILLSMY), 217–237 (TGITMVATTTAAACALFLLSM), and 247–267 (VVIFGLIADVLNTWIFNAWVI).

Belongs to the SecD/SecF family. SecF subfamily. Part of the protein translocation apparatus. Forms a complex with SecD.

It is found in the cell membrane. Involved in protein export. The polypeptide is Protein-export membrane protein SecF (Methanopyrus kandleri (strain AV19 / DSM 6324 / JCM 9639 / NBRC 100938)).